A 750-amino-acid polypeptide reads, in one-letter code: Alpha-galactosidase C (750 aa).

Residues 1 to 26 (MFRSTATVAAATAMGLLTATGHGSLA) form the signal peptide. N-linked (GlcNAc...) asparagine glycosylation is found at N58, N162, N186, N194, N366, N428, N432, and N453. D511 serves as the catalytic Nucleophile. The Proton donor role is filled by D573.

The protein belongs to the glycosyl hydrolase 36 family. In terms of assembly, homotetramer. Requires Mg(2+) as cofactor. NAD(+) is required as a cofactor.

Its subcellular location is the secreted. The enzyme catalyses Hydrolysis of terminal, non-reducing alpha-D-galactose residues in alpha-D-galactosides, including galactose oligosaccharides, galactomannans and galactolipids.. Hydrolyzes a variety of simple alpha-D-galactoside as well as more complex molecules such as oligosaccharides and polysaccharides. Active on paranitrophenyl-alpha-galactoside, raffinose, locust bean gum and gum guar. The protein is Alpha-galactosidase C (aglC) of Emericella nidulans (strain FGSC A4 / ATCC 38163 / CBS 112.46 / NRRL 194 / M139) (Aspergillus nidulans).